Here is a 304-residue protein sequence, read N- to C-terminus: Non-specific ribonucleoside hydrolase RihC (304 aa).

H233 is a catalytic residue.

The protein belongs to the IUNH family. RihC subfamily.

Hydrolyzes both purine and pyrimidine ribonucleosides with a broad-substrate specificity. In Escherichia coli O127:H6 (strain E2348/69 / EPEC), this protein is Non-specific ribonucleoside hydrolase RihC.